The chain runs to 81 residues: Apolipoprotein C-I, acidic form (81 aa).

The N-terminal stretch at 1–24 (MRLFLSLLVVVLSIVLEGPTPAQG) is a signal peptide.

The protein belongs to the apolipoprotein C1 family.

The protein resides in the secreted. This is Apolipoprotein C-I, acidic form (APOC1A) from Theropithecus gelada (Gelada baboon).